The sequence spans 347 residues: Holliday junction branch migration complex subunit RuvB (347 aa).

The tract at residues 1–183 (MSEERFVSGH…FGVVLQLQFY (183 aa)) is large ATPase domain (RuvB-L). Residues Leu22, Arg23, Gly64, Lys67, Thr68, Thr69, 130–132 (EDF), Arg173, Tyr183, and Arg220 each bind ATP. Thr68 contacts Mg(2+). Residues 184-254 (SEEELTRILM…VADAGLRMMG (71 aa)) form a small ATPAse domain (RuvB-S) region. The tract at residues 257–347 (AMGLDTVDHK…PEGPVQPRLF (91 aa)) is head domain (RuvB-H). The DNA site is built by Arg312 and Arg317.

This sequence belongs to the RuvB family. As to quaternary structure, homohexamer. Forms an RuvA(8)-RuvB(12)-Holliday junction (HJ) complex. HJ DNA is sandwiched between 2 RuvA tetramers; dsDNA enters through RuvA and exits via RuvB. An RuvB hexamer assembles on each DNA strand where it exits the tetramer. Each RuvB hexamer is contacted by two RuvA subunits (via domain III) on 2 adjacent RuvB subunits; this complex drives branch migration. In the full resolvosome a probable DNA-RuvA(4)-RuvB(12)-RuvC(2) complex forms which resolves the HJ.

It is found in the cytoplasm. It carries out the reaction ATP + H2O = ADP + phosphate + H(+). The RuvA-RuvB-RuvC complex processes Holliday junction (HJ) DNA during genetic recombination and DNA repair, while the RuvA-RuvB complex plays an important role in the rescue of blocked DNA replication forks via replication fork reversal (RFR). RuvA specifically binds to HJ cruciform DNA, conferring on it an open structure. The RuvB hexamer acts as an ATP-dependent pump, pulling dsDNA into and through the RuvAB complex. RuvB forms 2 homohexamers on either side of HJ DNA bound by 1 or 2 RuvA tetramers; 4 subunits per hexamer contact DNA at a time. Coordinated motions by a converter formed by DNA-disengaged RuvB subunits stimulates ATP hydrolysis and nucleotide exchange. Immobilization of the converter enables RuvB to convert the ATP-contained energy into a lever motion, pulling 2 nucleotides of DNA out of the RuvA tetramer per ATP hydrolyzed, thus driving DNA branch migration. The RuvB motors rotate together with the DNA substrate, which together with the progressing nucleotide cycle form the mechanistic basis for DNA recombination by continuous HJ branch migration. Branch migration allows RuvC to scan DNA until it finds its consensus sequence, where it cleaves and resolves cruciform DNA. The polypeptide is Holliday junction branch migration complex subunit RuvB (Symbiobacterium thermophilum (strain DSM 24528 / JCM 14929 / IAM 14863 / T)).